A 190-amino-acid polypeptide reads, in one-letter code: Elongation factor P-like protein (190 aa).

It belongs to the elongation factor P family.

The polypeptide is Elongation factor P-like protein (Serratia proteamaculans (strain 568)).